Here is a 134-residue protein sequence, read N- to C-terminus: Arginine decarboxylase proenzyme (134 aa).

Residue Ser82 is the Schiff-base intermediate with substrate; via pyruvic acid of the active site. Ser82 carries the pyruvic acid (Ser); by autocatalysis modification. The active-site Proton acceptor; for processing activity is the His87. Cys102 serves as the catalytic Proton donor; for catalytic activity.

Belongs to the prokaryotic AdoMetDC family. Type 1 subfamily. Heterooctamer of four alpha and four beta chains arranged as a tetramer of alpha/beta heterodimers. Pyruvate serves as cofactor. In terms of processing, is synthesized initially as an inactive proenzyme. Formation of the active enzyme involves a self-maturation process in which the active site pyruvoyl group is generated from an internal serine residue via an autocatalytic post-translational modification. Two non-identical subunits are generated from the proenzyme in this reaction, and the pyruvate is formed at the N-terminus of the alpha chain, which is derived from the carboxyl end of the proenzyme. The post-translation cleavage follows an unusual pathway, termed non-hydrolytic serinolysis, in which the side chain hydroxyl group of the serine supplies its oxygen atom to form the C-terminus of the beta chain, while the remainder of the serine residue undergoes an oxidative deamination to produce ammonia and the pyruvoyl group blocking the N-terminus of the alpha chain.

It catalyses the reaction L-arginine + H(+) = agmatine + CO2. Its pathway is amine and polyamine biosynthesis; agmatine biosynthesis; agmatine from L-arginine: step 1/1. Specifically catalyzes the decarboxylation of L-arginine to agmatine. Has no S-adenosylmethionine decarboxylase (AdoMetDC) activity. This is Arginine decarboxylase proenzyme from Caldivirga maquilingensis (strain ATCC 700844 / DSM 13496 / JCM 10307 / IC-167).